We begin with the raw amino-acid sequence, 750 residues long: von Willebrand factor A domain-containing protein DDB_G0292188 (750 aa).

Residues 17–249 (EIKTVFNSDS…IKDDLLLDVV (233 aa)) form the VWFA domain. Low complexity-rich tracts occupy residues 586 to 595 (SINDNNNSFN) and 603 to 645 (PFFE…SSAS). The segment at 586–657 (SINDNNNSFN…PPPSQMLNEQ (72 aa)) is disordered.

The protein is von Willebrand factor A domain-containing protein DDB_G0292188 of Dictyostelium discoideum (Social amoeba).